Reading from the N-terminus, the 449-residue chain is Glycoprotein endo-alpha-1,2-mannosidase (449 aa).

Topologically, residues 1–8 are cytoplasmic; the sequence is MIRFRRRT. Residues 9–29 form a helical; Signal-anchor for type II membrane protein membrane-spanning segment; it reads CITLSIFIFLVCLIMAGLKHL. Residues 30–449 lie on the Lumenal side of the membrane; sequence RPENAAFGSP…YMKEKEHWLV (420 aa). The catalytic stretch occupies residues 59 to 449; it reads DSENHLKGNT…YMKEKEHWLV (391 aa).

This sequence belongs to the glycosyl hydrolase 99 family.

It localises to the golgi apparatus membrane. The enzyme catalyses N-{alpha-Glc-(1-&gt;3)-alpha-Man-(1-&gt;2)-alpha-Man-(1-&gt;2)-alpha-Man-(1-&gt;3)-[alpha-Man-(1-&gt;2)-alpha-Man-(1-&gt;3)-[alpha-Man-(1-&gt;2)-alpha-Man-(1-&gt;6)]-alpha-Man-(1-&gt;6)]-beta-Man-(1-&gt;4)-beta-GlcNAc-(1-&gt;4)-beta-GlcNAc}-L-asparaginyl-[protein] + H2O = alpha-D-glucosyl-(1-&gt;3)-D-mannopyranose + N(4)-{alpha-D-Man-(1-&gt;2)-alpha-D-Man-(1-&gt;3)-[alpha-D-Man-(1-&gt;2)-alpha-D-Man-(1-&gt;3)-[alpha-D-Man-(1-&gt;2)-alpha-D-Man-(1-&gt;6)]-alpha-D-Man-(1-&gt;6)]-beta-D-Man-(1-&gt;4)-beta-D-GlaNAc-(1-&gt;4)-beta-D-GlcNAc}-L-asparaginyl-[protein] (N-glucan mannose isomer 8A1,2,3B1,2). The chain is Glycoprotein endo-alpha-1,2-mannosidase (manea) from Xenopus laevis (African clawed frog).